Here is a 57-residue protein sequence, read N- to C-terminus: Potassium channel toxin KTx1 (57 aa).

The first 13 residues, 1-13 (FLVLLLVSLMCYA), serve as a signal peptide directing secretion. A propeptide spanning residues 14–18 (EIAEG) is cleaved from the precursor. 3 disulfides stabilise this stretch: Cys-24-Cys-37, Cys-30-Cys-42, and Cys-36-Cys-51.

It belongs to the scorpion calcin-like family. KTX subfamily. In terms of tissue distribution, expressed by the venom gland.

Its subcellular location is the secreted. In terms of biological role, this recombinant peptide inhibits voltage-gated potassium channels mKv1.3/KCNA3 (IC(50)=1.70 uM), mKv1.1/KCNA1 (10 uM inhibits 40% of currents) and hKv1.2/KCNA2 (10 uM inhibits 42% of currents). May also increase intracellular calcium release through the activation of nuclear inositol 1,4,5-trisphosphate receptors (ITPR) of cardiomyocytes, thereby causing an increase in the contraction frequency of these cells. The polypeptide is Potassium channel toxin KTx1 (Isometrus maculatus (Lesser brown scorpion)).